A 436-amino-acid chain; its full sequence is Chromosomal replication initiator protein DnaA (436 aa).

The domain I, interacts with DnaA modulators stretch occupies residues 1 to 69 (MSIFTKIKKS…SELYEKETGI (69 aa)). The segment at 69 to 97 (IKPKIDIVTKEISHRPLTIEEIIEPTTPS) is domain II. The domain III, AAA+ region stretch occupies residues 98 to 311 (VLIPEYTFES…GMITKINAMS (214 aa)). Residues glycine 142, glycine 144, lysine 145, and threonine 146 each contribute to the ATP site. The segment at 312–436 (KILGISEITL…KNKIQIKKSE (125 aa)) is domain IV, binds dsDNA.

Belongs to the DnaA family. As to quaternary structure, oligomerizes as a right-handed, spiral filament on DNA at oriC.

Its subcellular location is the cytoplasm. Its function is as follows. Plays an essential role in the initiation and regulation of chromosomal replication. ATP-DnaA binds to the origin of replication (oriC) to initiate formation of the DNA replication initiation complex once per cell cycle. Binds the DnaA box (a 9 base pair repeat at the origin) and separates the double-stranded (ds)DNA. Forms a right-handed helical filament on oriC DNA; dsDNA binds to the exterior of the filament while single-stranded (ss)DNA is stabiized in the filament's interior. The ATP-DnaA-oriC complex binds and stabilizes one strand of the AT-rich DNA unwinding element (DUE), permitting loading of DNA polymerase. After initiation quickly degrades to an ADP-DnaA complex that is not apt for DNA replication. Binds acidic phospholipids. The chain is Chromosomal replication initiator protein DnaA from Nautilia profundicola (strain ATCC BAA-1463 / DSM 18972 / AmH).